A 426-amino-acid polypeptide reads, in one-letter code: Tubby protein homolog 1 (426 aa).

Residues 16 to 28 (QRKMLEDKQKQKR) are required for localization to cilia in AWB sensory neurons. The tract at residues 19–39 (MLEDKQKQKRHQSAGSVRTTS) is disordered.

This sequence belongs to the TUB family. As to quaternary structure, interacts with rgb-3. As to expression, expressed in ciliated sensory neurons.

Its subcellular location is the cytoplasm. The protein resides in the cell projection. The protein localises to the axon. It localises to the dendrite. It is found in the cilium. Its function is as follows. Has a role in fat regulation independent of daf-16. Implicated in ciliar sensory function which is required for normal sensory behavior such as chemotaxis. Required for extension and growth of sensory neuronal cilia during postembryonic development, potentially via mediating signaling protein transport and localization of PI(4,5)P2 to the ciliary base. Functions in life span control via the insulin/IGF-1 pathway. Thought to be involved in neuronal trafficking. This Caenorhabditis elegans protein is Tubby protein homolog 1.